Reading from the N-terminus, the 457-residue chain is Serine--tRNA ligase (457 aa).

252–254 lines the L-serine pocket; sequence TAE. ATP-binding positions include 283 to 285 and V299; that span reads RKE. An L-serine-binding site is contributed by E306. 370 to 373 is a binding site for ATP; the sequence is EVVS. T406 contacts L-serine.

This sequence belongs to the class-II aminoacyl-tRNA synthetase family. Type-1 seryl-tRNA synthetase subfamily. As to quaternary structure, homodimer. The tRNA molecule binds across the dimer.

The protein resides in the cytoplasm. It carries out the reaction tRNA(Ser) + L-serine + ATP = L-seryl-tRNA(Ser) + AMP + diphosphate + H(+). The catalysed reaction is tRNA(Sec) + L-serine + ATP = L-seryl-tRNA(Sec) + AMP + diphosphate + H(+). The protein operates within aminoacyl-tRNA biosynthesis; selenocysteinyl-tRNA(Sec) biosynthesis; L-seryl-tRNA(Sec) from L-serine and tRNA(Sec): step 1/1. Functionally, catalyzes the attachment of serine to tRNA(Ser). Is also able to aminoacylate tRNA(Sec) with serine, to form the misacylated tRNA L-seryl-tRNA(Sec), which will be further converted into selenocysteinyl-tRNA(Sec). The sequence is that of Serine--tRNA ligase from Thermococcus onnurineus (strain NA1).